The chain runs to 728 residues: Homoaconitase, mitochondrial (728 aa).

A mitochondrion-targeting transit peptide spans 1-24 (MVAIPRLARLSVPAWALSARGRFY). [4Fe-4S] cluster-binding residues include Cys362, Cys422, and Cys425.

Belongs to the aconitase/IPM isomerase family. [4Fe-4S] cluster serves as cofactor.

Its subcellular location is the mitochondrion. It catalyses the reaction (2R,3S)-homoisocitrate = cis-homoaconitate + H2O. The protein operates within amino-acid biosynthesis; L-lysine biosynthesis via AAA pathway; L-alpha-aminoadipate from 2-oxoglutarate: step 3/5. Functionally, catalyzes the reversible hydration of cis-homoaconitate to (2R,3S)-homoisocitrate, a step in the alpha-aminoadipate pathway for lysine biosynthesis. In Cryptococcus neoformans var. neoformans serotype D (strain B-3501A) (Filobasidiella neoformans), this protein is Homoaconitase, mitochondrial (LYS4).